Reading from the N-terminus, the 1099-residue chain is Solute carrier family 12 member 1 (1099 aa).

Residues 1 to 177 (MSLNNSSNVF…EDDQAGVVKF (177 aa)) are Cytoplasmic-facing. The RFXV motif signature appears at 20 to 23 (RFQV). Positions 31-53 (ESSAAADDNTDPPHYEETSFGDE) are disordered. Position 61 is a phosphoserine (S61). S91 bears the Phosphoserine; by OXSR1 and STK39 mark. T95 is subject to Phosphothreonine. A phosphothreonine; by OXSR1 and STK39 mark is found at T100 and T105. At T118 the chain carries Phosphothreonine. The residue at position 120 (S120) is a Phosphoserine. Position 130 is a phosphoserine; by AMPK (S130). Phosphoserine is present on S148. A helical transmembrane segment spans residues 178–198 (GWVKGVLVRCMLNIWGVMLFI). Topologically, residues 199 to 201 (RLS) are extracellular. Residues 202–222 (WIVGEAGIGLGVLIILLSTMV) traverse the membrane as a helical segment. The Cytoplasmic segment spans residues 223-259 (TSITGLSTSAIATNGFVRGGGAYYLISRSLGPEFGGS). The helical transmembrane segment at 260-280 (IGLIFAFANAVAVAMYVVGFA) threads the bilayer. At 281–302 (ETVVDLLKESDSMMVDPTNDIR) the chain is on the extracellular side. The helical transmembrane segment at 303–323 (IIGSITVVILLGISVAGMEWE) threads the bilayer. Topologically, residues 324-327 (AKAQ) are cytoplasmic. A helical membrane pass occupies residues 328-348 (VILLVILLIAIANFFIGTVIP). Residues 349–379 (SNNEKKSRGFFNYQASIFAENFGPRFTKGEG) lie on the Extracellular side of the membrane. Residues 380–400 (FFSVFAIFFPAATGILAGANI) form a helical membrane-spanning segment. Residues 401–417 (SGDLEDPQDAIPRGTML) lie on the Cytoplasmic side of the membrane. A helical transmembrane segment spans residues 418-438 (AIFITTVAYLGVAICVGACVV). Residues 439 to 550 (RDATGNMNDT…NNEPLRGYIL (112 aa)) lie on the Extracellular side of the membrane. N-linked (GlcNAc...) asparagine glycosylation is found at N446 and N456. Transmembrane regions (helical) follow at residues 551 to 571 (TFLI…APII) and 572 to 592 (SNFF…ASYA). Over 593–609 (KSPGWRPAYGIYNMWVS) the chain is Extracellular. The chain crosses the membrane as a helical span at residues 610-630 (LFGAVLCCAVMFVINWWAAVI). Topologically, residues 631 to 1099 (TYVIEFFLYV…NHKNVLTFYS (469 aa)) are cytoplasmic.

It belongs to the SLC12A transporter family. When phosphorylated, interacts with PPP3CB. Phosphorylated at Ser-91, Thr-100 and Thr-105 by OXSR1/OSR1 and STK39/SPAK downstream of WNK kinases (WNK1, WNK2, WNK3 or WNK4), promoting its activity. As to expression, kidney; localizes to the thick ascending limbs (at protein level).

It localises to the apical cell membrane. It catalyses the reaction K(+)(out) + 2 chloride(out) + Na(+)(out) = K(+)(in) + 2 chloride(in) + Na(+)(in). With respect to regulation, activated following phosphorylation by OXSR1/OSR1 and STK39/SPAK downstream of WNK kinases (WNK1, WNK2, WNK3 or WNK4). Renal sodium, potassium and chloride ion cotransporter that mediates the transepithelial NaCl reabsorption in the thick ascending limb and plays an essential role in the urinary concentration and volume regulation. Electrically silent transporter system. This Homo sapiens (Human) protein is Solute carrier family 12 member 1 (SLC12A1).